The sequence spans 128 residues: Ribosome-binding factor A (128 aa).

The protein belongs to the RbfA family. In terms of assembly, monomer. Binds 30S ribosomal subunits, but not 50S ribosomal subunits or 70S ribosomes.

The protein resides in the cytoplasm. In terms of biological role, one of several proteins that assist in the late maturation steps of the functional core of the 30S ribosomal subunit. Associates with free 30S ribosomal subunits (but not with 30S subunits that are part of 70S ribosomes or polysomes). Required for efficient processing of 16S rRNA. May interact with the 5'-terminal helix region of 16S rRNA. This chain is Ribosome-binding factor A, found in Microcystis aeruginosa (strain NIES-843 / IAM M-2473).